The following is a 549-amino-acid chain: Chaperonin GroEL 3 (549 aa).

Residues T29 to P32, D86 to T90, G414, N477 to A479, and D493 contribute to the ATP site.

It belongs to the chaperonin (HSP60) family. Forms a cylinder of 14 subunits composed of two heptameric rings stacked back-to-back. Interacts with the co-chaperonin GroES.

It localises to the cytoplasm. The catalysed reaction is ATP + H2O + a folded polypeptide = ADP + phosphate + an unfolded polypeptide.. Functionally, together with its co-chaperonin GroES, plays an essential role in assisting protein folding. The GroEL-GroES system forms a nano-cage that allows encapsulation of the non-native substrate proteins and provides a physical environment optimized to promote and accelerate protein folding. This chain is Chaperonin GroEL 3, found in Frankia casuarinae (strain DSM 45818 / CECT 9043 / HFP020203 / CcI3).